The primary structure comprises 629 residues: Glycerol-3-phosphate dehydrogenase SDP6, mitochondrial (629 aa).

Residues 1–48 constitute a mitochondrion transit peptide; it reads MSLASIRRLAAGAAVIAAASGGAVYLSPSVASSDKGGGPILDSLRRRL. Position 75–103 (75–103) interacts with FAD; that stretch reads DVLVIGGGATGSGVALDAVTRGLRVGLVE.

Belongs to the FAD-dependent glycerol-3-phosphate dehydrogenase family. FAD is required as a cofactor. Expressed in germinating seedlings. Also detected in roots, leaves, flowers, developing siliques and germinating seeds.

The protein localises to the mitochondrion inner membrane. It catalyses the reaction a quinone + sn-glycerol 3-phosphate = dihydroxyacetone phosphate + a quinol. It participates in polyol metabolism; glycerol degradation via glycerol kinase pathway; glycerone phosphate from sn-glycerol 3-phosphate (anaerobic route): step 1/1. Required for glycerol catabolism and involved in NADH/NAD(+) homeostasis. Essential for postgerminative growth and seedling establishment. In Arabidopsis thaliana (Mouse-ear cress), this protein is Glycerol-3-phosphate dehydrogenase SDP6, mitochondrial.